The sequence spans 120 residues: UPF0145 protein Bcenmc03_5217 (120 aa).

The protein belongs to the UPF0145 family.

The sequence is that of UPF0145 protein Bcenmc03_5217 from Burkholderia orbicola (strain MC0-3).